Reading from the N-terminus, the 45-residue chain is Protamine Z2 (45 aa).

Basic residues predominate over residues 1-23 (MKCGRKRRRRRRHACKRKKRACK). A disordered region spans residues 1–26 (MKCGRKRRRRRRHACKRKKRACKQRS).

In terms of tissue distribution, testis.

It is found in the nucleus. Its subcellular location is the chromosome. Protamines substitute for histones in the chromatin of sperm during the haploid phase of spermatogenesis. They compact sperm DNA into a highly condensed, stable and inactive complex. This is Protamine Z2 from Scyliorhinus canicula (Small-spotted catshark).